The primary structure comprises 335 residues: Teichoic acids export ATP-binding protein TagH (335 aa).

The ABC transporter domain maps to 26 to 246 (IKGLFMPKSQ…YDEFVKWFNK (221 aa)). Residue 60 to 67 (GINGSGKS) participates in ATP binding.

The protein belongs to the ABC transporter superfamily. Teichoic acids exporter (TC 3.A.1.104.1) family. In terms of assembly, the complex is composed of two ATP-binding proteins (TagH) and two transmembrane proteins (TagG).

It localises to the cell membrane. The enzyme catalyses ATP + H2O + teichoic acidSide 1 = ADP + phosphate + teichoic acidSide 2.. In terms of biological role, part of the ABC transporter complex TagGH involved in teichoic acids export. Responsible for energy coupling to the transport system. This chain is Teichoic acids export ATP-binding protein TagH, found in Listeria innocua serovar 6a (strain ATCC BAA-680 / CLIP 11262).